Reading from the N-terminus, the 151-residue chain is Ubiquitin-conjugating enzyme E2 2 (151 aa).

Positions 1–26 (MSTTARRRLMRDFKRMQQDPPQGVSA) are disordered. Residues 4-150 (TARRRLMRDF…VRDTVEASWT (147 aa)) form the UBC core domain. Catalysis depends on Cys88, which acts as the Glycyl thioester intermediate.

Belongs to the ubiquitin-conjugating enzyme family.

It localises to the cytoplasm. Its subcellular location is the nucleus. It carries out the reaction S-ubiquitinyl-[E1 ubiquitin-activating enzyme]-L-cysteine + [E2 ubiquitin-conjugating enzyme]-L-cysteine = [E1 ubiquitin-activating enzyme]-L-cysteine + S-ubiquitinyl-[E2 ubiquitin-conjugating enzyme]-L-cysteine.. Its pathway is protein modification; protein ubiquitination. Functionally, catalyzes the covalent attachment of ubiquitin to other proteins. Plays a role in transcription regulation by catalyzing the monoubiquitination of histone H2B to form H2BK123ub1. H2BK123ub1 gives a specific tag for epigenetic transcriptional activation and is also a prerequisite for H3K4me and H3K79me formation. Also involved in postreplication repair of UV-damaged DNA, in N-end rule-dependent protein degradation and in sporulation. This Yarrowia lipolytica (strain CLIB 122 / E 150) (Yeast) protein is Ubiquitin-conjugating enzyme E2 2 (UBC2).